The chain runs to 84 residues: Defensin-like protein 116 (84 aa).

The first 24 residues, 1–24, serve as a signal peptide directing secretion; that stretch reads MAITKNMLVVLLLTIIFVTSSVHC. 4 disulfide bridges follow: Cys-40/Cys-80, Cys-46/Cys-71, Cys-55/Cys-78, and Cys-59/Cys-79.

This sequence belongs to the DEFL family.

The protein resides in the secreted. The sequence is that of Defensin-like protein 116 from Arabidopsis thaliana (Mouse-ear cress).